The following is a 249-amino-acid chain: Triosephosphate isomerase (249 aa).

9-11 serves as a coordination point for substrate; the sequence is NWK. His95 serves as the catalytic Electrophile. Glu167 serves as the catalytic Proton acceptor. Substrate contacts are provided by residues Gly173, Ser213, and 234-235; that span reads GG.

Belongs to the triosephosphate isomerase family. In terms of assembly, homodimer.

The protein resides in the cytoplasm. It catalyses the reaction D-glyceraldehyde 3-phosphate = dihydroxyacetone phosphate. The protein operates within carbohydrate biosynthesis; gluconeogenesis. It participates in carbohydrate degradation; glycolysis; D-glyceraldehyde 3-phosphate from glycerone phosphate: step 1/1. In terms of biological role, involved in the gluconeogenesis. Catalyzes stereospecifically the conversion of dihydroxyacetone phosphate (DHAP) to D-glyceraldehyde-3-phosphate (G3P). The sequence is that of Triosephosphate isomerase from Solibacter usitatus (strain Ellin6076).